The following is an 89-amino-acid chain: Large ribosomal subunit protein bL31B (89 aa).

Belongs to the bacterial ribosomal protein bL31 family. Type B subfamily. As to quaternary structure, part of the 50S ribosomal subunit.

The chain is Large ribosomal subunit protein bL31B from Actinobacillus pleuropneumoniae serotype 5b (strain L20).